Here is a 288-residue protein sequence, read N- to C-terminus: Nucleotide-binding protein Neut_1559 (288 aa).

Residue 8–15 participates in ATP binding; it reads GLSGSGKS. 57–60 contributes to the GTP binding site; that stretch reads DMRS.

This sequence belongs to the RapZ-like family.

Its function is as follows. Displays ATPase and GTPase activities. The chain is Nucleotide-binding protein Neut_1559 from Nitrosomonas eutropha (strain DSM 101675 / C91 / Nm57).